The following is a 345-amino-acid chain: Phosphoribosylformylglycinamidine cyclo-ligase (345 aa).

This sequence belongs to the AIR synthase family.

It localises to the cytoplasm. It catalyses the reaction 2-formamido-N(1)-(5-O-phospho-beta-D-ribosyl)acetamidine + ATP = 5-amino-1-(5-phospho-beta-D-ribosyl)imidazole + ADP + phosphate + H(+). It functions in the pathway purine metabolism; IMP biosynthesis via de novo pathway; 5-amino-1-(5-phospho-D-ribosyl)imidazole from N(2)-formyl-N(1)-(5-phospho-D-ribosyl)glycinamide: step 2/2. The sequence is that of Phosphoribosylformylglycinamidine cyclo-ligase from Shewanella frigidimarina (strain NCIMB 400).